Consider the following 466-residue polypeptide: Asparagine--tRNA ligase (466 aa).

This sequence belongs to the class-II aminoacyl-tRNA synthetase family. In terms of assembly, homodimer.

It is found in the cytoplasm. The enzyme catalyses tRNA(Asn) + L-asparagine + ATP = L-asparaginyl-tRNA(Asn) + AMP + diphosphate + H(+). The protein is Asparagine--tRNA ligase of Escherichia coli O157:H7.